A 323-amino-acid chain; its full sequence is MDPKYQRVALNDGHFMPVLGFGSYAPPEVPRNRVVEVTKLAIEAGFRHIDSAYLYNNEEQVGLAIRSKIADGSVKREDIFYTSKLWCTFFRPQLVQPALESSLKKLQLDYVDLYLIHFPMALKPGETPLPKDENGKVMFDTVDLCAIWEAMEKCKDAGLAKSIGVSNFNRRQLEMILNNPGLKYKPVCNQVECHPYLNQSKLLDFCKSKDIVLVAHSALGTQRHKLWVDQNSPALLEDPVLCALAKKHKRSPALIALRYQLQRGVVVLAKSYNEQRIRENVQVFEFQLTSEDMKVLDDLNRNFRYVVMDFLVDHPDYPFSDEY.

NADP(+) contacts are provided by residues 20 to 24 and Asp50; that span reads GFGSY. The active-site Proton donor is the Tyr55. His117 lines the substrate pocket. NADP(+)-binding positions include 166–167, Gln190, 216–221, and 270–280; these read SN, HSALGT, and KSYNEQRIREN.

The protein belongs to the aldo/keto reductase family. Monomer. In terms of tissue distribution, high expression in liver. Also expressed in kidney.

It is found in the cytoplasm. Its subcellular location is the cytosol. It catalyses the reaction chlordecone alcohol + NADP(+) = chlordecone + NADPH + H(+). It carries out the reaction a 3alpha-hydroxysteroid + NADP(+) = a 3-oxosteroid + NADPH + H(+). The enzyme catalyses a 3alpha-hydroxysteroid + NAD(+) = a 3-oxosteroid + NADH + H(+). The catalysed reaction is 5alpha-androstane-3alpha,17beta-diol + NADP(+) = 17beta-hydroxy-5alpha-androstan-3-one + NADPH + H(+). It catalyses the reaction 5alpha-androstane-3beta,17beta-diol + NADP(+) = 17beta-hydroxy-5alpha-androstan-3-one + NADPH + H(+). It carries out the reaction 5alpha-androstane-3alpha,17beta-diol + NAD(+) = 17beta-hydroxy-5alpha-androstan-3-one + NADH + H(+). The enzyme catalyses 17beta-estradiol + NADP(+) = estrone + NADPH + H(+). The catalysed reaction is 17beta-estradiol + NAD(+) = estrone + NADH + H(+). It catalyses the reaction (20S)-hydroxypregn-4-en-3-one + NADP(+) = progesterone + NADPH + H(+). It carries out the reaction (20S)-hydroxypregn-4-en-3-one + NAD(+) = progesterone + NADH + H(+). The enzyme catalyses androsterone + NADP(+) = 5alpha-androstan-3,17-dione + NADPH + H(+). The catalysed reaction is testosterone + NADP(+) = androst-4-ene-3,17-dione + NADPH + H(+). It catalyses the reaction testosterone + NAD(+) = androst-4-ene-3,17-dione + NADH + H(+). It carries out the reaction 3alpha-hydroxy-5alpha-androstane 17-O-(beta-D-glucuronate) + NADP(+) = 5alpha-dihydrotestosterone 17-O-(beta-D-glucuronate) + NADPH + H(+). The enzyme catalyses (3beta,5alpha,17beta)-3-hydroxy-androstan-17-yl sulfate + NADP(+) = 5alpha-dihydrotestosterone sulfate + NADPH + H(+). The catalysed reaction is 5alpha-androstane-3alpha,17beta-diol + NAD(+) = androsterone + NADH + H(+). The protein operates within steroid metabolism. Potently inhibited by benzbromarone, 3',3'',5',5''-tetrabromophenolphthalein (TBPP) and o-cresolphthalein. In terms of biological role, cytosolic aldo-keto reductase that catalyzes the NADH and NADPH-dependent reduction of ketosteroids to hydroxysteroids. Liver specific enzyme that acts as an NAD(P)(H)-dependent 3-, 17- and 20-ketosteroid reductase on the steroid nucleus and side chain. Displays the ability to catalyze both oxidation and reduction in vitro, but most probably acts as a reductase in vivo since the oxidase activity measured in vitro is inhibited by physiological concentration of NADPH. Acts preferentially as a 3-alpha-hydroxysteroid dehydrogenase (HSD) with a subsidiary 3-beta-HSD activity. Catalyzes efficiently the transformation of the potent androgen 5-alpha-dihydrotestosterone (5alpha-DHT or 17beta-hydroxy-5alpha-androstan-3-one) into the less active form, 5-alpha-androstan-3-alpha,17-beta-diol (3-alpha-diol). Catalyzes the reduction of estrone into 17beta-estradiol but with low efficiency. Metabolizes a broad spectrum of natural and synthetic therapeutic steroid and plays an important role in metabolism of androgens, estrogens, progestereone and conjugated steroids. Catalyzes the biotransformation of the pesticide chlordecone (kepone) to its corresponding alcohol leading to increased biliary excretion of the pesticide and concomitant reduction of its neurotoxicity since bile is the major excretory route. The sequence is that of Aldo-keto reductase family 1 member C4 (AKR1C4) from Macaca fuscata fuscata (Japanese macaque).